A 295-amino-acid polypeptide reads, in one-letter code: Golgi-associated RAB2 interactor protein 1A (295 aa).

A disordered region spans residues 187–206 (MPNSSTETTPESSRPASSQS). Residues 190 to 206 (SSTETTPESSRPASSQS) are compositionally biased toward low complexity. Phosphoserine occurs at positions 220, 221, 251, and 255.

Belongs to the GARIN family. In terms of assembly, interacts (via N-terminus) with RAB2B (in GTP-bound form).

It is found in the golgi apparatus. In terms of biological role, RAB2B effector protein required for accurate acrosome formation and normal male fertility. This is Golgi-associated RAB2 interactor protein 1A (Garin1a) from Rattus norvegicus (Rat).